Consider the following 141-residue polypeptide: Lutropin subunit beta (141 aa).

An N-terminal signal peptide occupies residues 1 to 20 (MEMLQGLLLWLLLSVGGVWA). 6 disulfides stabilise this stretch: Cys-29–Cys-77, Cys-43–Cys-92, Cys-46–Cys-130, Cys-54–Cys-108, Cys-58–Cys-110, and Cys-113–Cys-120. Residue Asn-33 is glycosylated (N-linked (GlcNAc...) asparagine).

The protein belongs to the glycoprotein hormones subunit beta family. As to quaternary structure, heterodimer of a common alpha chain and a unique beta chain which confers biological specificity to thyrotropin, lutropin, follitropin and gonadotropin.

Its subcellular location is the secreted. Functionally, promotes spermatogenesis and ovulation by stimulating the testes and ovaries to synthesize steroids. The sequence is that of Lutropin subunit beta (LHB1) from Ceratotherium simum (White rhinoceros).